A 388-amino-acid polypeptide reads, in one-letter code: Oxytocin receptor (388 aa).

Residues 1–38 are Extracellular-facing; sequence MEGTPAANWSIELDLGSGVPPGAEGNLTAGPPRRNEAL. N-linked (GlcNAc...) asparagine glycosylation is found at N8 and N26. The chain crosses the membrane as a helical span at residues 39-63; it reads ARVEVAVLCLILFLALSGNACVLLA. At 64–74 the chain is on the cytoplasmic side; the sequence is LRTTRHKHSRL. Residues 75 to 97 traverse the membrane as a helical segment; sequence FFFMKHLSIADLVVAVFQVLPQL. Over 98 to 113 the chain is Extracellular; sequence LWDITFRFYGPDLLCR. C112 and C187 are disulfide-bonded. The chain crosses the membrane as a helical span at residues 114 to 135; sequence LVKYLQVVGMFASTYLLLLMSL. Residues 136–154 are Cytoplasmic-facing; it reads DRCLAICQPLRSLRRRTDR. A helical membrane pass occupies residues 155–175; sequence LAVLATWLGCLVASVPQVHIF. Residues 176 to 202 are Extracellular-facing; the sequence is SLREVADGVFDCWAVFIQPWGPKAYVT. The helical transmembrane segment at 203 to 225 threads the bilayer; the sequence is WITLAVYIVPVIVLAACYGLISF. The Cytoplasmic portion of the chain corresponds to 226–274; that stretch reads KIWQNLRLKTAAAAAAAEGSDAAGGAGRAALARVSSVKLISKAKIRTVK. A helical transmembrane segment spans residues 275–293; it reads MTFIIVLAFIVCWTPFFFV. The Extracellular portion of the chain corresponds to 294 to 308; that stretch reads QMWSVWDVNAPKEAS. A helical transmembrane segment spans residues 309 to 331; it reads AFIIAMLLASLNSCCNPWIYMLF. Over 332–388 the chain is Cytoplasmic; sequence TGHLFHELVQRFLCCSARYLKGSRPGETSISKKSNSSTFVLSRRSSSQRSCSQPSSA. Residues 354-388 form a disordered region; it reads SRPGETSISKKSNSSTFVLSRRSSSQRSCSQPSSA. A phosphoserine mark is found at S365 and S367. Residues 365–388 show a composition bias toward low complexity; sequence SNSSTFVLSRRSSSQRSCSQPSSA.

This sequence belongs to the G-protein coupled receptor 1 family. Vasopressin/oxytocin receptor subfamily.

The protein localises to the cell membrane. Functionally, receptor for oxytocin. The activity of this receptor is mediated by G proteins which activate a phosphatidylinositol-calcium second messenger system. This Mus musculus (Mouse) protein is Oxytocin receptor (Oxtr).